The sequence spans 152 residues: UPF0178 protein SAR0734 (152 aa).

This sequence belongs to the UPF0178 family.

The chain is UPF0178 protein SAR0734 from Staphylococcus aureus (strain MRSA252).